We begin with the raw amino-acid sequence, 111 residues long: U-scoloptoxin(16)-Er8a (111 aa).

The first 26 residues, M1–G26, serve as a signal peptide directing secretion.

It belongs to the scoloptoxin-16 family. Post-translationally, contains 4 disulfide bonds. Expressed by the venom gland.

It localises to the secreted. This Ethmostigmus rubripes (Giant centipede) protein is U-scoloptoxin(16)-Er8a.